The sequence spans 104 residues: Translation initiation factor 1A (104 aa).

The span at Met1–Val14 shows a compositional bias: low complexity. Residues Met1–Asn20 form a disordered region. An S1-like domain is found at Thr12 to Thr87.

This sequence belongs to the eIF-1A family.

Functionally, seems to be required for maximal rate of protein biosynthesis. Enhances ribosome dissociation into subunits and stabilizes the binding of the initiator Met-tRNA(I) to 40 S ribosomal subunits. The sequence is that of Translation initiation factor 1A from Methanococcus maripaludis (strain DSM 14266 / JCM 13030 / NBRC 101832 / S2 / LL).